The sequence spans 329 residues: Elongation factor Ts (329 aa).

Residues 79-82 are involved in Mg(2+) ion dislocation from EF-Tu; the sequence is TDFV.

It belongs to the EF-Ts family.

The protein resides in the cytoplasm. Its function is as follows. Associates with the EF-Tu.GDP complex and induces the exchange of GDP to GTP. It remains bound to the aminoacyl-tRNA.EF-Tu.GTP complex up to the GTP hydrolysis stage on the ribosome. In Parabacteroides distasonis (strain ATCC 8503 / DSM 20701 / CIP 104284 / JCM 5825 / NCTC 11152), this protein is Elongation factor Ts.